The following is a 148-amino-acid chain: UPF0756 membrane protein YeaL (148 aa).

Transmembrane regions (helical) follow at residues 14 to 34, 51 to 71, 86 to 106, and 121 to 141; these read ALGF…LIIV, LSIG…SGTL, LVAI…VTLM, and VLGV…AGLV.

It belongs to the UPF0756 family.

The protein localises to the cell membrane. The polypeptide is UPF0756 membrane protein YeaL (Escherichia coli (strain B / REL606)).